Here is a 261-residue protein sequence, read N- to C-terminus: Transmembrane protein 106A (261 aa).

The helical transmembrane segment at 95 to 115 (VFLAVSICLVTSSLIIFFLFP) threads the bilayer.

It belongs to the TMEM106 family.

It localises to the cell membrane. Functionally, activates macrophages and polarizes them into M1-like macrophages through the activation of the MAPK and NF-kappaB signaling pathway. Upon activation, up-regulates the expression of CD80, CD86, CD69 and MHC II on macrophages, and induces the release of pro-inflammatory cytokines such as TNF, IL1B, IL6, CCL2 and nitric oxide. May play a role in inhibition of proliferation and migration. The polypeptide is Transmembrane protein 106A (TMEM106A) (Bos taurus (Bovine)).